The primary structure comprises 109 residues: uncharacterized protein (109 aa).

The protein to E.coli YtfG C-terminal region.

This is an uncharacterized protein from Haemophilus influenzae (strain ATCC 51907 / DSM 11121 / KW20 / Rd).